The sequence spans 292 residues: UPF0696 protein C11orf68 homolog (292 aa).

Residues 1 to 10 (MAAAAAAVAG) are compositionally biased toward low complexity. A disordered region spans residues 1 to 60 (MAAAAAAVAGAGRGGGGGADPGQERSRARSWVGAERSEGRRMEPNEELEEEDSPGGREDG). Gly residues predominate over residues 11–20 (AGRGGGGGAD). Residues 35–44 (ERSEGRRMEP) show a composition bias toward basic and acidic residues.

Belongs to the UPF0696 family.

The sequence is that of UPF0696 protein C11orf68 homolog (Bles03) from Rattus norvegicus (Rat).